A 396-amino-acid polypeptide reads, in one-letter code: Putative cytochrome P450 YjiB (396 aa).

Cys349 contributes to the heme binding site.

It belongs to the cytochrome P450 family. Heme serves as cofactor.

The chain is Putative cytochrome P450 YjiB (yjiB) from Bacillus subtilis (strain 168).